A 425-amino-acid polypeptide reads, in one-letter code: Glucose-1-phosphate adenylyltransferase (425 aa).

Residues Y110, G175, 190-191 (EK), and S208 contribute to the alpha-D-glucose 1-phosphate site.

The protein belongs to the bacterial/plant glucose-1-phosphate adenylyltransferase family. Homotetramer.

It carries out the reaction alpha-D-glucose 1-phosphate + ATP + H(+) = ADP-alpha-D-glucose + diphosphate. The protein operates within glycan biosynthesis; glycogen biosynthesis. Its function is as follows. Involved in the biosynthesis of ADP-glucose, a building block required for the elongation reactions to produce glycogen. Catalyzes the reaction between ATP and alpha-D-glucose 1-phosphate (G1P) to produce pyrophosphate and ADP-Glc. The polypeptide is Glucose-1-phosphate adenylyltransferase (Nitrosospira multiformis (strain ATCC 25196 / NCIMB 11849 / C 71)).